We begin with the raw amino-acid sequence, 308 residues long: Aspartate carbamoyltransferase catalytic subunit (308 aa).

Carbamoyl phosphate is bound by residues R55 and T56. K85 provides a ligand contact to L-aspartate. Carbamoyl phosphate-binding residues include R106, H135, and Q138. Residues R168 and R229 each coordinate L-aspartate. Carbamoyl phosphate contacts are provided by L267 and P268.

This sequence belongs to the aspartate/ornithine carbamoyltransferase superfamily. ATCase family. Heterododecamer (2C3:3R2) of six catalytic PyrB chains organized as two trimers (C3), and six regulatory PyrI chains organized as three dimers (R2).

The catalysed reaction is carbamoyl phosphate + L-aspartate = N-carbamoyl-L-aspartate + phosphate + H(+). It functions in the pathway pyrimidine metabolism; UMP biosynthesis via de novo pathway; (S)-dihydroorotate from bicarbonate: step 2/3. Functionally, catalyzes the condensation of carbamoyl phosphate and aspartate to form carbamoyl aspartate and inorganic phosphate, the committed step in the de novo pyrimidine nucleotide biosynthesis pathway. The protein is Aspartate carbamoyltransferase catalytic subunit of Laribacter hongkongensis (strain HLHK9).